Here is a 78-residue protein sequence, read N- to C-terminus: UPF0270 protein IL0325 (78 aa).

It belongs to the UPF0270 family.

The polypeptide is UPF0270 protein IL0325 (Idiomarina loihiensis (strain ATCC BAA-735 / DSM 15497 / L2-TR)).